The sequence spans 89 residues: Small ribosomal subunit protein uS15 (89 aa).

This sequence belongs to the universal ribosomal protein uS15 family. Part of the 30S ribosomal subunit. Forms a bridge to the 50S subunit in the 70S ribosome, contacting the 23S rRNA.

Its function is as follows. One of the primary rRNA binding proteins, it binds directly to 16S rRNA where it helps nucleate assembly of the platform of the 30S subunit by binding and bridging several RNA helices of the 16S rRNA. Forms an intersubunit bridge (bridge B4) with the 23S rRNA of the 50S subunit in the ribosome. The polypeptide is Small ribosomal subunit protein uS15 (Prochlorococcus marinus (strain MIT 9515)).